The primary structure comprises 226 residues: Probable transcriptional regulatory protein y4xI (226 aa).

The Response regulatory domain occupies 1 to 114 (MRTLLVDTDL…ELIARMRALL (114 aa)). Residues 122–220 (CPIIEFGNLH…VRGIGYTLEL (99 aa)) constitute a DNA-binding region (ompR/PhoB-type).

Its subcellular location is the cytoplasm. This chain is Probable transcriptional regulatory protein y4xI, found in Sinorhizobium fredii (strain NBRC 101917 / NGR234).